Reading from the N-terminus, the 394-residue chain is Tubulin-like protein CetZ4 (394 aa).

Residues 10-14 (QAGGK), 110-112 (GTG), E142, N169, and N187 each bind GTP.

Belongs to the CetZ family.

The protein localises to the cytoplasm. Involved in cell shape control. The sequence is that of Tubulin-like protein CetZ4 from Haloferax volcanii (strain ATCC 29605 / DSM 3757 / JCM 8879 / NBRC 14742 / NCIMB 2012 / VKM B-1768 / DS2) (Halobacterium volcanii).